The sequence spans 634 residues: DNA-directed RNA polymerase subunit gamma (634 aa).

Zn(2+) contacts are provided by Cys74, Cys76, Cys89, and Cys92. 3 residues coordinate Mg(2+): Asp471, Asp473, and Asp475.

This sequence belongs to the RNA polymerase beta' chain family. RpoC1 subfamily. As to quaternary structure, in cyanobacteria the RNAP catalytic core is composed of 2 alpha, 1 beta, 1 beta', 1 gamma and 1 omega subunit. When a sigma factor is associated with the core the holoenzyme is formed, which can initiate transcription. The cofactor is Mg(2+). It depends on Zn(2+) as a cofactor.

The catalysed reaction is RNA(n) + a ribonucleoside 5'-triphosphate = RNA(n+1) + diphosphate. In terms of biological role, DNA-dependent RNA polymerase catalyzes the transcription of DNA into RNA using the four ribonucleoside triphosphates as substrates. This is DNA-directed RNA polymerase subunit gamma from Synechococcus sp. (strain WH7803).